Consider the following 388-residue polypeptide: Phosphoglycerate kinase (388 aa).

Residues 21–23 (DLN), Arg36, 59–62 (HLGR), Arg114, and Arg147 contribute to the substrate site. Residues Lys198, Glu315, and 341–344 (GGDT) contribute to the ATP site.

Belongs to the phosphoglycerate kinase family. In terms of assembly, monomer.

The protein localises to the cytoplasm. The enzyme catalyses (2R)-3-phosphoglycerate + ATP = (2R)-3-phospho-glyceroyl phosphate + ADP. It participates in carbohydrate degradation; glycolysis; pyruvate from D-glyceraldehyde 3-phosphate: step 2/5. This Buchnera aphidicola subsp. Schizaphis graminum (strain Sg) protein is Phosphoglycerate kinase.